We begin with the raw amino-acid sequence, 505 residues long: E3 SUMO-protein ligase PIAS4-A (505 aa).

The SAP domain maps to 12 to 46 (VKSFRVSDLQTLLASMGRSKSGLKQDLVGRALRLV). The LXXLL motif motif lies at 20 to 24 (LQTLL). Residue lysine 35 forms a Glycyl lysine isopeptide (Lys-Gly) (interchain with G-Cter in SUMO); alternate linkage. Lysine 35 participates in a covalent cross-link: Glycyl lysine isopeptide (Lys-Gly) (interchain with G-Cter in SUMO2); alternate. Glycyl lysine isopeptide (Lys-Gly) (interchain with G-Cter in SUMO2) cross-links involve residues lysine 56 and lysine 68. The 161-residue stretch at 104 to 264 (GIPKPAPPPA…SVAVYLVRVF (161 aa)) folds into the PINIT domain. An SP-RING-type zinc finger spans residues 296–381 (PESEIATTGL…LKETPEDVEE (86 aa)). Residues cysteine 327, histidine 329, cysteine 350, and cysteine 353 each coordinate Zn(2+). A required for nuclear localization region spans residues 374-505 (ETPEDVEEIE…DYDKDLVTAY (132 aa)). Residues 395–407 (DDKEKERERENSR) show a composition bias toward basic and acidic residues. The interval 395-505 (DDKEKERERE…DYDKDLVTAY (111 aa)) is disordered. Over residues 437 to 457 (SGSGGASAGTGSTSGGSGGGT) the composition is skewed to gly residues. Residues 462-485 (TLDDSSEEEGGGGAEDSEETDDSQ) show a composition bias toward acidic residues. The segment covering 493 to 505 (GRYDYDKDLVTAY) has biased composition (basic and acidic residues).

The protein belongs to the PIAS family. In terms of processing, sumoylated. Lys-35 is the main site of sumoylation. In terms of tissue distribution, highly expressed in spleen, liver, and brain. Expressed at lower levels in heart, intestine, kidney, gill, skin, and muscle.

The protein localises to the nucleus. It catalyses the reaction S-ubiquitinyl-[E2 ubiquitin-conjugating enzyme]-L-cysteine + [acceptor protein]-L-lysine = [E2 ubiquitin-conjugating enzyme]-L-cysteine + N(6)-ubiquitinyl-[acceptor protein]-L-lysine.. It functions in the pathway protein modification; protein sumoylation. Functionally, functions as an E3-type small ubiquitin-like modifier (SUMO) ligase. May play a role as a transcriptional coregulator in various cellular pathways. Catalyzes conjugation of SUMO2 to KAT5 in response to DNA damage, facilitating repair of DNA double-strand breaks (DSBs) via homologous recombination (HR). Mediates sumoylation of PARP1 in response to PARP1 trapping to chromatin. Negatively regulates induction of interferon phi 1 (ifnphi1) mediated by mavs and ticam1/trif. Also inhibits ifnphi1-mediated activation of the interferon-stimulated genes (ISGs) pkz and cd40, and to a lesser extent rsad2 and isg15. May inhibit ticam1/trif-mediated activation of NF-kappa-B. The sequence is that of E3 SUMO-protein ligase PIAS4-A from Danio rerio (Zebrafish).